Consider the following 372-residue polypeptide: Meiotic drive suppressor wtf18 (372 aa).

Helical transmembrane passes span 86-106, 120-140, 153-173, 197-217, 233-253, and 257-277; these read FLLRLLISVLAVSVVFFTAWV, AFSVTIGITCPILFIATFCFF, VTVIFLAQCVKVTVIFLAQCV, DLVVTIWLAWVVICFILFGCV, CSISAALFFILLLVCIPIWTL, and LFGLFQVLGVQSCVVIVTKGL.

Belongs to the WTF family. Homomer. Interacts with other proteins that exhibit high sequence similarity.

Its subcellular location is the spore membrane. The protein resides in the vacuole membrane. Its function is as follows. Acts as a suppressor component of the dual wtf meiotic drive system, and can suppress but not confer meiotic drive by compatible poisons. Wtf meiotic drive systems promote unequal transmission of alleles from the parental zygote to progeny spores by encoding a poison and an antidote from the same locus; the poison is trans-acting and forms toxic aggregates in all spores within an ascus, wherease the antidote is spore-specific and targets aggregates for degradation by the vacuole. Meiotic drive by wtf systems therefore lead to poisoning of all progeny that do not inherit the dual poison/antidote allele, or express a compatible antidote. This chain is Meiotic drive suppressor wtf18, found in Schizosaccharomyces pombe (strain 972 / ATCC 24843) (Fission yeast).